The chain runs to 357 residues: S-adenosylmethionine:tRNA ribosyltransferase-isomerase (357 aa).

This sequence belongs to the QueA family. As to quaternary structure, monomer.

It localises to the cytoplasm. It carries out the reaction 7-aminomethyl-7-carbaguanosine(34) in tRNA + S-adenosyl-L-methionine = epoxyqueuosine(34) in tRNA + adenine + L-methionine + 2 H(+). Its pathway is tRNA modification; tRNA-queuosine biosynthesis. Transfers and isomerizes the ribose moiety from AdoMet to the 7-aminomethyl group of 7-deazaguanine (preQ1-tRNA) to give epoxyqueuosine (oQ-tRNA). The protein is S-adenosylmethionine:tRNA ribosyltransferase-isomerase of Hamiltonella defensa subsp. Acyrthosiphon pisum (strain 5AT).